The following is a 410-amino-acid chain: Proteasomal ubiquitin receptor ADRM1 (410 aa).

Residues 17–130 form the Pru domain; that stretch reads SSSKYLVEFR…RKVNEYLNNP (114 aa). Ser18 carries the post-translational modification Phosphoserine. Positions 191 to 257 are enriched in low complexity; sequence GSGGPATSSS…PAAQTPSLPA (67 aa). Disordered stretches follow at residues 191-264 and 381-410; these read GSGG…SSTQ and FAKA…MSLD. The DEUBAD domain maps to 281–395; the sequence is PAMPTEGSGV…EGSDSKTDDG (115 aa). The span at 381 to 401 shows a compositional bias: basic and acidic residues; that stretch reads FAKAMEGSDSKTDDGDSKDKK.

Belongs to the ADRM1 family. In terms of assembly, component of the 19S proteasome regulatory particle complex. The 26S proteasome consists of a 20S core particle (CP) and two 19S regulatory subunits (RP).

The protein resides in the cytoplasm. It localises to the nucleus. Its function is as follows. Component of the 26S proteasome, a multiprotein complex involved in the ATP-dependent degradation of ubiquitinated proteins. This complex plays a key role in the maintenance of protein homeostasis by removing misfolded or damaged proteins, which could impair cellular functions, and by removing proteins whose functions are no longer required. Therefore, the proteasome participates in numerous cellular processes, including cell cycle progression, apoptosis, or DNA damage repair. Within the complex, functions as a proteasomal ubiquitin receptor. This chain is Proteasomal ubiquitin receptor ADRM1 (adrm1b), found in Danio rerio (Zebrafish).